The sequence spans 72 residues: Translation initiation factor IF-1 1 (72 aa).

Positions 1-72 constitute an S1-like domain; sequence MSKDDVIQMQ…TRARIVFRSK (72 aa).

Belongs to the IF-1 family. Component of the 30S ribosomal translation pre-initiation complex which assembles on the 30S ribosome in the order IF-2 and IF-3, IF-1 and N-formylmethionyl-tRNA(fMet); mRNA recruitment can occur at any time during PIC assembly.

It localises to the cytoplasm. Functionally, one of the essential components for the initiation of protein synthesis. Stabilizes the binding of IF-2 and IF-3 on the 30S subunit to which N-formylmethionyl-tRNA(fMet) subsequently binds. Helps modulate mRNA selection, yielding the 30S pre-initiation complex (PIC). Upon addition of the 50S ribosomal subunit IF-1, IF-2 and IF-3 are released leaving the mature 70S translation initiation complex. This chain is Translation initiation factor IF-1 1, found in Bordetella avium (strain 197N).